We begin with the raw amino-acid sequence, 150 residues long: Catabolic 3-dehydroquinase 2 (150 aa).

Residue Tyr-23 is the Proton acceptor of the active site. Residues Asn-74, His-80, and Asp-87 each coordinate substrate. The Proton donor role is filled by His-100. Residues 101 to 102 and Arg-111 contribute to the substrate site; that span reads IT.

The protein belongs to the type-II 3-dehydroquinase family. In terms of assembly, homododecamer. Adopts a ring-like structure, composed of an arrangement of two hexameric rings stacked on top of one another.

It catalyses the reaction 3-dehydroquinate = 3-dehydroshikimate + H2O. The protein operates within aromatic compound metabolism; 3,4-dihydroxybenzoate biosynthesis; 3,4-dihydroxybenzoate from 3-dehydroquinate: step 1/2. Its function is as follows. Is involved in the catabolism of quinate. Allows the utilization of quinate as carbon source via the beta-ketoadipate pathway. The protein is Catabolic 3-dehydroquinase 2 of Aspergillus flavus (strain ATCC 200026 / FGSC A1120 / IAM 13836 / NRRL 3357 / JCM 12722 / SRRC 167).